The chain runs to 295 residues: Protease HtpX (295 aa).

2 helical membrane-spanning segments follow: residues 4 to 24 and 41 to 61; these read ILLF…TLSL and SSLL…SLFI. Residue histidine 147 participates in Zn(2+) binding. Glutamate 148 is an active-site residue. Residue histidine 151 coordinates Zn(2+). A run of 2 helical transmembrane segments spans residues 158–178 and 199–219; these read VTLA…ARII and VATI…VMWF. Glutamate 224 is a binding site for Zn(2+).

Belongs to the peptidase M48B family. The cofactor is Zn(2+).

The protein localises to the cell inner membrane. This chain is Protease HtpX, found in Pseudomonas putida (strain ATCC 700007 / DSM 6899 / JCM 31910 / BCRC 17059 / LMG 24140 / F1).